A 183-amino-acid polypeptide reads, in one-letter code: ATP synthase subunit b, chloroplastic (183 aa).

Residues 25–45 form a helical membrane-spanning segment; that stretch reads DILATNLINLTVVVGVLIFFG.

It belongs to the ATPase B chain family. As to quaternary structure, F-type ATPases have 2 components, F(1) - the catalytic core - and F(0) - the membrane proton channel. F(1) has five subunits: alpha(3), beta(3), gamma(1), delta(1), epsilon(1). F(0) has four main subunits: a(1), b(1), b'(1) and c(10-14). The alpha and beta chains form an alternating ring which encloses part of the gamma chain. F(1) is attached to F(0) by a central stalk formed by the gamma and epsilon chains, while a peripheral stalk is formed by the delta, b and b' chains.

The protein resides in the plastid. The protein localises to the chloroplast thylakoid membrane. Its function is as follows. F(1)F(0) ATP synthase produces ATP from ADP in the presence of a proton or sodium gradient. F-type ATPases consist of two structural domains, F(1) containing the extramembraneous catalytic core and F(0) containing the membrane proton channel, linked together by a central stalk and a peripheral stalk. During catalysis, ATP synthesis in the catalytic domain of F(1) is coupled via a rotary mechanism of the central stalk subunits to proton translocation. Functionally, component of the F(0) channel, it forms part of the peripheral stalk, linking F(1) to F(0). The protein is ATP synthase subunit b, chloroplastic of Zea mays (Maize).